A 591-amino-acid polypeptide reads, in one-letter code: UvrABC system protein C (591 aa).

One can recognise a GIY-YIG domain in the interval 14-91; that stretch reads DSPGCYLHKD…IQKNMPKYNI (78 aa). Positions 196–231 constitute a UVR domain; that stretch reads DKIVTGLKEKMLAASQAMEFERAAEYRDLISGIATL.

This sequence belongs to the UvrC family. Interacts with UvrB in an incision complex.

The protein resides in the cytoplasm. Functionally, the UvrABC repair system catalyzes the recognition and processing of DNA lesions. UvrC both incises the 5' and 3' sides of the lesion. The N-terminal half is responsible for the 3' incision and the C-terminal half is responsible for the 5' incision. In Streptococcus uberis (strain ATCC BAA-854 / 0140J), this protein is UvrABC system protein C.